We begin with the raw amino-acid sequence, 256 residues long: Large ribosomal subunit protein eL8y (256 aa).

Basic residues predominate over residues 1 to 15 (MAPKKGVKVASKKKP). Positions 1 to 20 (MAPKKGVKVASKKKPEKVTN) are disordered.

It belongs to the eukaryotic ribosomal protein eL8 family.

This Arabidopsis thaliana (Mouse-ear cress) protein is Large ribosomal subunit protein eL8y (RPL7AB).